The following is a 43-amino-acid chain: Protein PsbN (43 aa).

The chain crosses the membrane as a helical span at residues 7–27 (ITIFLSCFLVGVTGYALYTAF).

Belongs to the PsbN family.

Its subcellular location is the plastid. It is found in the chloroplast thylakoid membrane. Its function is as follows. May play a role in photosystem I and II biogenesis. The sequence is that of Protein PsbN from Klebsormidium bilatum (Filamentous green alga).